Here is a 246-residue protein sequence, read N- to C-terminus: 4-hydroxy-tetrahydrodipicolinate reductase (246 aa).

Residues 7 to 12 (GATGRT), 84 to 86 (GTT), and 108 to 111 (ASNF) contribute to the NAD(+) site. Catalysis depends on His140, which acts as the Proton donor/acceptor. Position 141 (His141) interacts with (S)-2,3,4,5-tetrahydrodipicolinate. Catalysis depends on Lys144, which acts as the Proton donor. 150–151 (GT) is a binding site for (S)-2,3,4,5-tetrahydrodipicolinate.

The protein belongs to the DapB family.

Its subcellular location is the cytoplasm. The enzyme catalyses (S)-2,3,4,5-tetrahydrodipicolinate + NAD(+) + H2O = (2S,4S)-4-hydroxy-2,3,4,5-tetrahydrodipicolinate + NADH + H(+). It catalyses the reaction (S)-2,3,4,5-tetrahydrodipicolinate + NADP(+) + H2O = (2S,4S)-4-hydroxy-2,3,4,5-tetrahydrodipicolinate + NADPH + H(+). Its pathway is amino-acid biosynthesis; L-lysine biosynthesis via DAP pathway; (S)-tetrahydrodipicolinate from L-aspartate: step 4/4. Catalyzes the conversion of 4-hydroxy-tetrahydrodipicolinate (HTPA) to tetrahydrodipicolinate. This Natronomonas pharaonis (strain ATCC 35678 / DSM 2160 / CIP 103997 / JCM 8858 / NBRC 14720 / NCIMB 2260 / Gabara) (Halobacterium pharaonis) protein is 4-hydroxy-tetrahydrodipicolinate reductase.